The sequence spans 635 residues: 1-deoxy-D-xylulose-5-phosphate synthase (635 aa).

Thiamine diphosphate contacts are provided by residues His-72 and 113 to 115 (GHA). Asp-144 contacts Mg(2+). Thiamine diphosphate-binding positions include 145–146 (GA), Asn-174, Tyr-287, and Glu-370. Mg(2+) is bound at residue Asn-174.

It belongs to the transketolase family. DXPS subfamily. As to quaternary structure, homodimer. Mg(2+) is required as a cofactor. Thiamine diphosphate serves as cofactor.

The catalysed reaction is D-glyceraldehyde 3-phosphate + pyruvate + H(+) = 1-deoxy-D-xylulose 5-phosphate + CO2. It functions in the pathway metabolic intermediate biosynthesis; 1-deoxy-D-xylulose 5-phosphate biosynthesis; 1-deoxy-D-xylulose 5-phosphate from D-glyceraldehyde 3-phosphate and pyruvate: step 1/1. Catalyzes the acyloin condensation reaction between C atoms 2 and 3 of pyruvate and glyceraldehyde 3-phosphate to yield 1-deoxy-D-xylulose-5-phosphate (DXP). The sequence is that of 1-deoxy-D-xylulose-5-phosphate synthase from Trichormus variabilis (strain ATCC 29413 / PCC 7937) (Anabaena variabilis).